The primary structure comprises 425 residues: UDP-N-acetylglucosamine 1-carboxyvinyltransferase (425 aa).

Lysine 25 to asparagine 26 contacts phosphoenolpyruvate. A UDP-N-acetyl-alpha-D-glucosamine-binding site is contributed by arginine 95. The active-site Proton donor is the cysteine 119. Cysteine 119 carries the 2-(S-cysteinyl)pyruvic acid O-phosphothioketal modification. UDP-N-acetyl-alpha-D-glucosamine contacts are provided by residues arginine 124–glutamine 128, aspartate 306, and isoleucine 328.

The protein belongs to the EPSP synthase family. MurA subfamily.

It localises to the cytoplasm. It catalyses the reaction phosphoenolpyruvate + UDP-N-acetyl-alpha-D-glucosamine = UDP-N-acetyl-3-O-(1-carboxyvinyl)-alpha-D-glucosamine + phosphate. It functions in the pathway cell wall biogenesis; peptidoglycan biosynthesis. In terms of biological role, cell wall formation. Adds enolpyruvyl to UDP-N-acetylglucosamine. The polypeptide is UDP-N-acetylglucosamine 1-carboxyvinyltransferase (Thermus thermophilus (strain ATCC BAA-163 / DSM 7039 / HB27)).